We begin with the raw amino-acid sequence, 199 residues long: Chaperone protein TorD (199 aa).

Belongs to the TorD/DmsD family. TorD subfamily.

The protein resides in the cytoplasm. Its function is as follows. Involved in the biogenesis of TorA. Acts on TorA before the insertion of the molybdenum cofactor and, as a result, probably favors a conformation of the apoenzyme that is competent for acquiring the cofactor. In Escherichia coli O127:H6 (strain E2348/69 / EPEC), this protein is Chaperone protein TorD.